A 2472-amino-acid polypeptide reads, in one-letter code: Spectrin alpha chain, non-erythrocytic 1 (2472 aa).

Met1 is modified (N-acetylmethionine). Spectrin repeat units lie at residues 45-146 (RFQF…IKLL), 150-251 (KLVQ…QGKL), 256-358 (EVQR…ARLD), 361-465 (YRLQ…QYEQ), 468-570 (DLQL…AQLA), 574-676 (HLQQ…KLRE), 679-781 (QQQQ…QKLA), 785-888 (RLQQ…DLED), and 891-961 (QAQQ…QQVA). A Phosphoserine modification is found at Ser587. Lys637 carries the N6-acetyllysine modification. Residue Lys803 is modified to N6-acetyllysine. Ser924, Ser982, Ser999, Ser1029, Ser1031, and Ser1041 each carry phosphoserine. Residues 967-1026 (TGKELVLALYDYQEKSPREVTMKKGDILTLLNSTNKDWWKVEVNDRQGFVPAAYVKKLDP) enclose the SH3 domain. The stretch at 1096–1166 (LFREANELQQ…LESEGLMAEE (71 aa)) is one Spectrin 10 repeat. Tyr1176 carries the phosphotyrosine modification. A phosphoserine mark is found at Ser1190, Ser1207, Ser1217, Ser1291, Ser1306, Ser1323, and Ser1338. Residues 1233–1336 (HEVQRFHRDA…RADQRKAKLG (104 aa)) form a Spectrin 11 repeat. Spectrin repeat units follow at residues 1339–1441 (HDLQ…RMML) and 1446–1549 (ELQL…KLGE). Lys1519 is subject to N6-acetyllysine. Phosphoserine is present on residues Ser1550, Ser1557, Ser1578, Ser1615, and Ser1647. Spectrin repeat units lie at residues 1552–1656 (TLQQ…KLKE), 1659–1762 (KQQN…KLSE), 1764–1868 (HRLH…RLEE), 1871–1974 (EYQQ…KLDE), 1978–2081 (FLQF…KLLE), 2092–2194 (LFLT…LELQ), and 2206–2310 (LRQE…NLEQ). Thr2020 bears the Phosphothreonine mark. Lys2052 is modified (N6-acetyllysine). Thr2066 carries the post-translational modification Phosphothreonine. 3 EF-hand domains span residues 2323–2358 (EALK…LGYD), 2366–2401 (EPDP…RETE), and 2404–2439 (KSSE…EQAD). Ca(2+)-binding residues include Asp2336, Asp2338, Ser2340, Arg2342, Glu2347, Asp2379, Asn2381, Asp2383, His2385, and Glu2390. Lys2421 is modified (N6-acetyllysine).

Belongs to the spectrin family. As to quaternary structure, like erythrocyte spectrin, the spectrin-like proteins are capable of forming dimers which can further associate to tetramers. Interacts (via C-terminal spectrin repeats) with TRPC4. Interacts with CALM and EMD. Interacts with isoform 1 of ACP1. Identified in a complex with ACTN4, CASK, IQGAP1, MAGI2, NPHS1 and SPTBN1. Interacts with SHANK3 (via ANK repeats). Interacts with CLN3; this interaction regulates the fodrin localization at the plasma membrane. Post-translationally, phosphorylation of Tyr-1176 decreases sensitivity to cleavage by calpain in vitro. Expressed in the foot process layer of podocytes in the kidney glomerulus and in tubules (at protein level).

The protein resides in the cytoplasm. Its subcellular location is the cytoskeleton. The protein localises to the cell cortex. Its function is as follows. Fodrin, which seems to be involved in secretion, interacts with calmodulin in a calcium-dependent manner and is thus candidate for the calcium-dependent movement of the cytoskeleton at the membrane. In Rattus norvegicus (Rat), this protein is Spectrin alpha chain, non-erythrocytic 1 (Sptan1).